A 169-amino-acid polypeptide reads, in one-letter code: Podoplanin (169 aa).

An N-terminal signal peptide occupies residues 1–22 (MWRVPVLLLVLGGAGLRVPAAG). Topologically, residues 23 to 138 (ASTVRPDDII…EKDGLATVTL (116 aa)) are extracellular. Thr-25 is a glycosylation site (O-linked (GalNAc...) threonine). Residues 37-69 (DSVVTPGTEDSVVTPGAEDNVVTDGATEEPYES) are disordered. An O-linked (GalNAc...) serine glycan is attached at Ser-38. Residues Thr-41 and Thr-44 are each glycosylated (O-linked (GalNAc...) threonine). A glycan (O-linked (GalNAc...) serine) is linked at Ser-47. Residues Thr-50, Thr-59, Thr-63, Thr-72, Thr-76, Thr-79, Thr-83, Thr-92, Thr-96, Thr-106, Thr-107, Thr-108, Thr-113, Thr-126, and Thr-127 are each glycosylated (O-linked (GalNAc...) threonine). Residues 139 to 159 (VGIIVGVLLAIGFIGGIIIVV) traverse the membrane as a helical segment. The requires for dimerization and lipid rafts association stretch occupies residues 140 to 144 (GIIVG). Residues 160–169 (ARKMSGRYSP) lie on the Cytoplasmic side of the membrane. The interval 161 to 162 (RK) is requires for interaction with MSN and EZR.

It belongs to the podoplanin family. As to quaternary structure, homodimer. Interacts with CLEC1B; the interaction is independent of CLEC1B glycosylation and activates CLEC1B; the interaction is dependent of sialic acid on O-glycans. Interacts with CD9; this interaction is homophilic and attenuates platelet aggregation and pulmonary metastasis induced by PDPN. Interacts with LGALS8; the interaction is glycosylation-dependent; may participate in connection of the lymphatic endothelium to the surrounding extracellular matrix. Interacts with HSPA9. Interacts (via extracellular domain) with CD44; this interaction is required for PDPN-mediated directional migration and regulation of lamellipodia extension/stabilization during cell spreading and migration. Interacts (via cytoplasmic domain) with MSN and EZR; activates RHOA and promotes epithelial-mesenchymal transition. Interacts with CCL21; relocalized PDPN to the basolateral membrane. Extensively O-glycosylated. Contains sialic acid residues. O-glycosylation is necessary for platelet aggregation activity. Disialylated at Thr-59; sialic acid is critical for platelet-aggregating activity and for CLEC1B interaction. Post-translationally, the N-terminus is blocked.

The protein resides in the membrane. It localises to the cell projection. Its subcellular location is the filopodium membrane. It is found in the lamellipodium membrane. The protein localises to the microvillus membrane. The protein resides in the ruffle membrane. It localises to the membrane raft. Its subcellular location is the apical cell membrane. It is found in the basolateral cell membrane. The protein localises to the invadopodium. Functionally, mediates effects on cell migration and adhesion through its different partners. During development plays a role in blood and lymphatic vessels separation by binding CLEC1B, triggering CLEC1B activation in platelets and leading to platelet activation and/or aggregation. Interaction with CD9, on the contrary, attenuates platelet aggregation and pulmonary metastasis induced by PDPN. Mediates effects on cell migration and adhesion through its different partners. Through MSN or EZR interaction promotes epithelial-mesenchymal transition (EMT) leading to ERZ phosphorylation and triggering RHOA activation leading to cell migration increase and invasiveness. Interaction with CD44 promotes directional cell migration in epithelial and tumor cells. In lymph nodes (LNs), controls fibroblastic reticular cells (FRCs) adhesion to the extracellular matrix (ECM) and contraction of the actomyosin by maintaining ERM proteins (EZR; MSN and RDX) and MYL9 activation through association with unknown transmembrane proteins. Engagement of CLEC1B by PDPN promotes FRCs relaxation by blocking lateral membrane interactions leading to reduction of ERM proteins (EZR; MSN and RDX) and MYL9 activation. Through binding with LGALS8 may participate in connection of the lymphatic endothelium to the surrounding extracellular matrix. In keratinocytes, induces changes in cell morphology showing an elongated shape, numerous membrane protrusions, major reorganization of the actin cytoskeleton, increased motility and decreased cell adhesion. Controls invadopodia stability and maturation leading to efficient degradation of the extracellular matrix (ECM) in tumor cells through modulation of RHOC activity in order to activate ROCK1/ROCK2 and LIMK1/LIMK2 and inactivation of CFL1. Required for normal lung cell proliferation and alveolus formation at birth. Does not function as a water channel or as a regulator of aquaporin-type water channels. Does not have any effect on folic acid or amino acid transport. The protein is Podoplanin (PDPN) of Canis lupus familiaris (Dog).